A 1180-amino-acid polypeptide reads, in one-letter code: Pyruvate carboxylase 2 (1180 aa).

Residue serine 2 is modified to N-acetylserine. Positions 19–471 (EKNKILVANR…WTTFIDDTPQ (453 aa)) constitute a Biotin carboxylation domain. ATP-binding residues include lysine 137, glutamate 221, and histidine 256. One can recognise an ATP-grasp domain in the interval 141 to 338 (RHLAARANVP…IVSAQIQIAA (198 aa)). The active site involves arginine 313. The Pyruvate carboxyltransferase domain occupies 558–825 (TLLMDTTWRD…DTGINVEHVR (268 aa)). Residues 566–570 (RDAHQ) and arginine 639 contribute to the substrate site. Aspartate 567 contacts a divalent metal cation. Residues lysine 735, histidine 765, and histidine 767 each coordinate a divalent metal cation. Lysine 735 is subject to N6-carboxylysine. Threonine 899 lines the substrate pocket. The region spanning 1095 to 1170 (KADVHDTHQI…DASDLLVVLE (76 aa)) is the Biotinyl-binding domain. Lysine 1136 carries the post-translational modification N6-biotinyllysine.

Homotetramer. The cofactor is biotin. Requires Zn(2+) as cofactor.

It is found in the cytoplasm. It carries out the reaction hydrogencarbonate + pyruvate + ATP = oxaloacetate + ADP + phosphate + H(+). The protein operates within carbohydrate biosynthesis; gluconeogenesis. Pyruvate carboxylase catalyzes a 2-step reaction, involving the ATP-dependent carboxylation of the covalently attached biotin in the first step and the transfer of the carboxyl group to pyruvate in the second. The polypeptide is Pyruvate carboxylase 2 (PYC2) (Saccharomyces cerevisiae (strain ATCC 204508 / S288c) (Baker's yeast)).